We begin with the raw amino-acid sequence, 80 residues long: Diphthamide biosynthesis protein 3 (80 aa).

The DPH-type MB domain maps to 4–60 (FHDEVEIEDFEFDEEKDVYHYPCPCGDRFEIPREMLEMGEDVAQCPSCSLLIRVIYD). Fe cation contacts are provided by C26, C28, C48, and C51.

Belongs to the DPH3 family. In terms of assembly, component of the 2-(3-amino-3-carboxypropyl)histidine synthase complex composed of dph-1, dph-2, dph-3 and a NADH-dependent reductase. The cofactor is Fe(2+).

It catalyses the reaction [3Fe-4S](1+)-[protein] + Fe(2+)-[Dph3] = [3Fe-4S](0)-[protein] + Fe(3+)-[Dph3]. The catalysed reaction is 2 [3Fe-4S](0)-[protein] + 2 Fe(2+)-[Dph3] + NADH = 2 [4Fe-4S](1+)-[protein] + 2 [Dph3] + NAD(+) + H(+). Its pathway is protein modification; peptidyl-diphthamide biosynthesis. Required for the first step of diphthamide biosynthesis, a post-translational modification of histidine which occurs in elongation factor 2. Dph-1 and dph-2 transfer a 3-amino-3-carboxypropyl (ACP) group from S-adenosyl-L-methionine (SAM) to a histidine residue, the reaction is assisted by a reduction system comprising dph-3 and a NADH-dependent reductase. Acts as an electron donor to reduce the Fe-S cluster in dph1-dph2 keeping the [4Fe-4S] clusters in the active and reduced state. Restores iron to dph-1-dph-2 iron-sulfur clusters which have degraded from [4Fe-4S] to [3Fe-4S] by donating an iron atom to reform [4Fe-4S] clusters, in a manner dependent on the presence of elongation factor 2 and SAM. Associates with the elongator complex and is required for tRNA Wobble base modifications mediated by the elongator complex. The elongator complex is required for multiple tRNA modifications, including mcm5U (5-methoxycarbonylmethyl uridine), mcm5s 2U (5-methoxycarbonylmethyl-2-thiouridine), and ncm5U (5-carbamoylmethyl uridine). In Caenorhabditis elegans, this protein is Diphthamide biosynthesis protein 3.